A 111-amino-acid chain; its full sequence is uncharacterized protein (111 aa).

The segment at 12–34 (AWCPSRPPASAPSAPQEAARRGD) is disordered. The interval 71–76 (PNIIIT) is required for interaction with PPP3CA. Residues T79 and T81 each carry the phosphothreonine modification.

In terms of assembly, interacts (via PxIxIT motif, when phosphorylated on Thr-79) with PPP3CA.

This is an uncharacterized protein from Mus musculus (Mouse).